Consider the following 88-residue polypeptide: HssA/B-like protein 61 (88 aa).

Belongs to the hssA/B family.

This is HssA/B-like protein 61 (hssl61) from Dictyostelium discoideum (Social amoeba).